A 650-amino-acid polypeptide reads, in one-letter code: PTS system mannose-specific EIIBCA component (650 aa).

The 98-residue stretch at 1–98 (MKLLAITSCP…PEELIQKALN (98 aa)) folds into the PTS EIIB type-2 domain. The Phosphocysteine intermediate; for EIIB activity role is filled by cysteine 9. The PTS EIIC type-2 domain maps to 123-456 (IYRHLMNGVS…SLVTALFVNV (334 aa)). 7 helical membrane passes run 133–153 (FMVPFIVVGGLLIAVALTLGG), 174–194 (IGSASFSFMIPILAGYIAYSI), 199–219 (GLVPGMIGGYIAATGSFYDSA), 221–241 (GAGFLGGIIAGFLAGYAALWI), 256–276 (IIIIPVFASLIVGLAFVFLIG), 297–317 (SSILLALILGAMISFDMGGPV), and 336–356 (IMGPIAVAICIPPIGLGIATF). At serine 365 the chain carries Phosphoserine. 3 consecutive transmembrane segments (helical) span residues 369 to 389 (MGKAAFTMGLFGITEGAIPFA), 396 to 416 (VIPSIMAGSMTGSVIAMIGNV), and 436 to 456 (VLMFFIAVIAGSLVTALFVNV). Residues 504 to 649 (DIISPELIEP…EEAYKLLEEI (146 aa)) enclose the PTS EIIA type-2 domain. Histidine 566 functions as the Tele-phosphohistidine intermediate; for EIIA activity in the catalytic mechanism.

It localises to the cell membrane. The enzyme catalyses D-mannose(out) + N(pros)-phospho-L-histidyl-[protein] = D-mannose 6-phosphate(in) + L-histidyl-[protein]. Its function is as follows. The phosphoenolpyruvate-dependent sugar phosphotransferase system (sugar PTS), a major carbohydrate active -transport system, catalyzes the phosphorylation of incoming sugar substrates concomitantly with their translocation across the cell membrane. This system is involved in mannose transport. The chain is PTS system mannose-specific EIIBCA component (manP) from Bacillus subtilis (strain 168).